We begin with the raw amino-acid sequence, 946 residues long: RIPOR family member 3 (946 aa).

3 positions are modified to phosphoserine: Ser-9, Ser-24, and Ser-340. Thr-345 is subject to Phosphothreonine. Phosphoserine occurs at positions 351 and 384. The interval Gly-390 to Ala-512 is disordered. The span at Ser-437–Pro-446 shows a compositional bias: basic and acidic residues. A compositionally biased stretch (polar residues) spans Ser-478–Asn-495. Basic and acidic residues predominate over residues Gly-496–Gly-508.

Belongs to the RIPOR family.

This chain is RIPOR family member 3, found in Homo sapiens (Human).